Consider the following 225-residue polypeptide: Uracil-DNA glycosylase (225 aa).

Asp-65 acts as the Proton acceptor in catalysis.

It belongs to the uracil-DNA glycosylase (UDG) superfamily. UNG family.

The protein resides in the cytoplasm. The enzyme catalyses Hydrolyzes single-stranded DNA or mismatched double-stranded DNA and polynucleotides, releasing free uracil.. Excises uracil residues from the DNA which can arise as a result of misincorporation of dUMP residues by DNA polymerase or due to deamination of cytosine. This Clostridium botulinum (strain Alaska E43 / Type E3) protein is Uracil-DNA glycosylase.